Consider the following 356-residue polypeptide: 3-isopropylmalate dehydrogenase (356 aa).

73-86 (GTQYDGLPREKRPE) contributes to the NAD(+) binding site. Residues R93, R103, R131, and D220 each coordinate substrate. Residues D220, D244, and D248 each coordinate Mg(2+). 278–290 (GSAPDIAGKGIAN) contributes to the NAD(+) binding site.

This sequence belongs to the isocitrate and isopropylmalate dehydrogenases family. LeuB type 1 subfamily. In terms of assembly, homodimer. Requires Mg(2+) as cofactor. It depends on Mn(2+) as a cofactor.

The protein localises to the cytoplasm. The catalysed reaction is (2R,3S)-3-isopropylmalate + NAD(+) = 4-methyl-2-oxopentanoate + CO2 + NADH. It participates in amino-acid biosynthesis; L-leucine biosynthesis; L-leucine from 3-methyl-2-oxobutanoate: step 3/4. Functionally, catalyzes the oxidation of 3-carboxy-2-hydroxy-4-methylpentanoate (3-isopropylmalate) to 3-carboxy-4-methyl-2-oxopentanoate. The product decarboxylates to 4-methyl-2 oxopentanoate. The protein is 3-isopropylmalate dehydrogenase of Nitrosomonas europaea (strain ATCC 19718 / CIP 103999 / KCTC 2705 / NBRC 14298).